The primary structure comprises 195 residues: MDHIIGFMGTTNMSHNTNLMIAAAATTTTTSSSSSSSSGGSGTNQLSRYENQKRRDWNTFGQYLRNHRPPLSLSRCSGAHVLEFLRYLDQFGKTKVHTHLCPFFGHPNPPAPCACPLRQAWGSLDALIGRLRAAFEENGGSPETNPFGARAVRLYLREVRDSQAKARGISYEKKKRKRPPPPLPPAQPAISSSPN.

Low complexity predominate over residues 28-38 (TTTSSSSSSSS). 2 disordered regions span residues 28–51 (TTTS…RYEN) and 162–195 (SQAK…SSPN). Positions 48 to 175 (RYENQKRRDW…ARGISYEKKK (128 aa)) constitute an ALOG domain. The Nuclear localization signal motif lies at 173 to 177 (KKKRK).

It belongs to the plant homeotic and developmental regulators ALOG protein family. In terms of tissue distribution, induced by NAC054/CUC1 and NAC098/CUC2 in shoot organ boundary cells.

It localises to the nucleus. Functionally, probable transcription regulator that acts as a developmental regulator by promoting cell growth in response to light. May suppress organ differentiation in the boundary region. This Arabidopsis thaliana (Mouse-ear cress) protein is Protein LIGHT-DEPENDENT SHORT HYPOCOTYLS 4 (LSH4).